A 102-amino-acid polypeptide reads, in one-letter code: RNA-binding protein Hfq (102 aa).

Residues 9–68 (DPFLNALRRERVPVSIYLVNGIKLQGQIESFDQFVILLKNTVSQMVYKHAISTVVPSRPV) enclose the Sm domain. Residues 64-102 (PSRPVSHHSNTPSGGTSNYHHGNNPSAPQQPQQESDDAE) are disordered. The segment covering 70–96 (HHSNTPSGGTSNYHHGNNPSAPQQPQQ) has biased composition (polar residues).

The protein belongs to the Hfq family. As to quaternary structure, homohexamer.

In terms of biological role, RNA chaperone that binds small regulatory RNA (sRNAs) and mRNAs to facilitate mRNA translational regulation in response to envelope stress, environmental stress and changes in metabolite concentrations. Also binds with high specificity to tRNAs. This Serratia proteamaculans (strain 568) protein is RNA-binding protein Hfq.